A 573-amino-acid polypeptide reads, in one-letter code: Zinc finger protein 10 (573 aa).

Residues 14–85 enclose the KRAB domain; sequence VTFKDVFVDF…EREIHQETHP (72 aa). The C2H2-type 1; atypical zinc-finger motif lies at 206–232; the sequence is DSCASNSNECGQTFCQNIHLIQFARTH. 9 consecutive C2H2-type zinc fingers follow at residues 265–287, 293–315, 321–343, 349–371, 377–399, 405–427, 433–455, 461–483, and 489–511; these read YECKECGKFFSWRSNLTRHQLIH, YECKECGKSFSRSSHLIGHQKTH, YECKECGKSFSWFSHLVTHQRTH, YTCNQCGKSFVHSSRLIRHQRTH, YECPECGKSFRQSTHLILHQRTH, YECNECGKSYSQRSHLVVHHRIH, FECKDCGKCFSRSSHLYSHQRTH, YECHDCGKSFSQSSALIVHQRIH, and YECCQCGKAFIRKNDLIKHQRIH. A C2H2-type 11; atypical zinc finger spans residues 517–539; the sequence is YKCNQCGIIFSQNSPFIVHQIAH.

This sequence belongs to the krueppel C2H2-type zinc-finger protein family. In terms of assembly, interacts (via the KRAB domain) with TRIM28 (via the RBCC domain).

Its subcellular location is the nucleus. In terms of biological role, may be involved in transcriptional regulation. This is Zinc finger protein 10 (ZNF10) from Homo sapiens (Human).